The sequence spans 122 residues: MIQQESQLKVADNTGAKKVKCFKVLGGSRRRYATVGDIIVCSVRDVEPDSSIKKGDVVKAVIVRTRRDILRKDGSSLRFDTNSCVIIDEKGNPKGTRIFGPIAREIRDRGFVKISSLAPEVI.

Belongs to the universal ribosomal protein uL14 family. Part of the 50S ribosomal subunit. Forms a cluster with proteins L3 and L19. In the 70S ribosome, L14 and L19 interact and together make contacts with the 16S rRNA in bridges B5 and B8.

Functionally, binds to 23S rRNA. Forms part of two intersubunit bridges in the 70S ribosome. This is Large ribosomal subunit protein uL14 from Chlamydia caviae (strain ATCC VR-813 / DSM 19441 / 03DC25 / GPIC) (Chlamydophila caviae).